We begin with the raw amino-acid sequence, 78 residues long: Large ribosomal subunit protein eL20 (78 aa).

This sequence belongs to the eukaryotic ribosomal protein eL20 family. As to quaternary structure, part of the 50S ribosomal subunit. Binds 23S rRNA.

The chain is Large ribosomal subunit protein eL20 from Pyrobaculum islandicum (strain DSM 4184 / JCM 9189 / GEO3).